Here is a 557-residue protein sequence, read N- to C-terminus: MFDCEPVSLLITIPGQVPEPIAADFPWLSLSILFPIAGSLLVPFIPDEGEGKQVRWYALFIALTTFLITVGAYLKGFEPAEEGLQLSERVPWLPDLGLTWAVGADGLSMPLILLTSFITALAVLAAWPVSFKPKLFFFLILAMDGGQIAVFAVQDMLLFFLAWELELLPVYLLLAIWGGKKRQYAATKFIIYTAGSSLFILLAGLAMGFFGGGAPNFEFTHLANQQFGTGFQLLCYGGLLIAFGVKLPIVPLHTWLPDAHGEATAPVHMLLAGILLKMGGYALLRFNAQLLPAAHAQFAPLLIVLGVVNIIYAALTSFAQRNLKRKIAYSSISHMGFVLIGIGSFSTLGTSGAMLQMISHGLIGASLFFLVGATYDRTHTLQLNEMGGVGQKMRIMFALWTVCSLASLALPGMSGFVSELMVFAGLVTDEVYTLPFRIVIAGLAAIGVILTPIYLLSMLREIFFGQENVDLLAKRELVDAEPREIYIIGSLLVPIIGIGLYPRIMTETYTASIDGLVARDKLSIERVINTSSSEFSNQNISISNGQAPNLNIYSSSK.

The next 14 membrane-spanning stretches (helical) occupy residues 25–45 (FPWLSLSILFPIAGSLLVPFI), 57–77 (YALFIALTTFLITVGAYLKGF), 111–131 (LILLTSFITALAVLAAWPVSF), 133–153 (PKLFFFLILAMDGGQIAVFAV), 157–177 (LLFFLAWELELLPVYLLLAIW), 189–209 (FIIYTAGSSLFILLAGLAMGF), 230–250 (GFQLLCYGGLLIAFGVKLPIV), 264–284 (TAPVHMLLAGILLKMGGYALL), 298–318 (FAPLLIVLGVVNIIYAALTSF), 327–347 (IAYSSISHMGFVLIGIGSFST), 353–373 (AMLQMISHGLIGASLFFLVGA), 397–417 (FALWTVCSLASLALPGMSGFV), 438–458 (IVIAGLAAIGVILTPIYLLSM), and 485–505 (IYIIGSLLVPIIGIGLYPRIM).

It belongs to the complex I subunit 4 family.

The protein localises to the cellular thylakoid membrane. The catalysed reaction is a plastoquinone + NADH + (n+1) H(+)(in) = a plastoquinol + NAD(+) + n H(+)(out). The enzyme catalyses a plastoquinone + NADPH + (n+1) H(+)(in) = a plastoquinol + NADP(+) + n H(+)(out). Functionally, NDH-1 shuttles electrons from NAD(P)H, via FMN and iron-sulfur (Fe-S) centers, to quinones in the respiratory chain. The immediate electron acceptor for the enzyme in this species is believed to be plastoquinone. Couples the redox reaction to proton translocation (for every two electrons transferred, four hydrogen ions are translocated across the cytoplasmic membrane), and thus conserves the redox energy in a proton gradient. The chain is NAD(P)H-quinone oxidoreductase chain 4 from Prochlorococcus marinus (strain SARG / CCMP1375 / SS120).